A 156-amino-acid polypeptide reads, in one-letter code: ATP synthase subunit b 2 (156 aa).

Residues 11-31 (LLAFIFFVWFCMKFVWPPIMG) traverse the membrane as a helical segment.

It belongs to the ATPase B chain family. F-type ATPases have 2 components, F(1) - the catalytic core - and F(0) - the membrane proton channel. F(1) has five subunits: alpha(3), beta(3), gamma(1), delta(1), epsilon(1). F(0) has three main subunits: a(1), b(2) and c(10-14). The alpha and beta chains form an alternating ring which encloses part of the gamma chain. F(1) is attached to F(0) by a central stalk formed by the gamma and epsilon chains, while a peripheral stalk is formed by the delta and b chains.

It is found in the cell inner membrane. In terms of biological role, f(1)F(0) ATP synthase produces ATP from ADP in the presence of a proton or sodium gradient. F-type ATPases consist of two structural domains, F(1) containing the extramembraneous catalytic core and F(0) containing the membrane proton channel, linked together by a central stalk and a peripheral stalk. During catalysis, ATP synthesis in the catalytic domain of F(1) is coupled via a rotary mechanism of the central stalk subunits to proton translocation. Component of the F(0) channel, it forms part of the peripheral stalk, linking F(1) to F(0). The sequence is that of ATP synthase subunit b 2 from Pseudoalteromonas atlantica (strain T6c / ATCC BAA-1087).